The following is a 230-amino-acid chain: Thioredoxin domain-containing protein PLP3A (230 aa).

Positions 89-173 constitute a Thioredoxin domain; the sequence is VSEGDFLGEV…GVAMDRLVGF (85 aa). Positions 197–230 are disordered; that stretch reads LSKKKKEEDDEDAEYQESIRRSVRSSENLDSDSD.

Belongs to the phosducin family. In terms of assembly, interacts with TUBB2, TUBB3, TUBB4 and TUBB5. Expressed in embryos, shoot meristems, leaf primordia, root meristems, floral meristems and young floral buds.

Its subcellular location is the cytoplasm. The protein resides in the nucleus. Its function is as follows. Tubulin-binding protein involved in microtubule formation. The chain is Thioredoxin domain-containing protein PLP3A (PLP3A) from Arabidopsis thaliana (Mouse-ear cress).